Consider the following 22-residue polypeptide: FFGSMIGALAKGLPSLISLIKK.

The residue at position 22 (lysine 22) is a Lysine amide.

In terms of tissue distribution, expressed by the skin glands.

It localises to the secreted. Antimicrobial peptide. Active against Gram-negative bacterium E.coli (MIC=12.5 uM) and against Gram-positive bacterium S.aureus (MIC=12.5 uM). This Nidirana okinavana (Kampira Falls frog) protein is Brevinin-1OKa.